The primary structure comprises 438 residues: GTPase Obg (438 aa).

The Obg domain maps to 2–160 (SMFLDTAKIS…RELELELKIL (159 aa)). Residues 128–147 (NIRFATPRNPAPEIAENGEP) are disordered. The OBG-type G domain maps to 161-338 (ADVGLVGFPS…LLDATANLLA (178 aa)). GTP contacts are provided by residues 167 to 174 (GFPSVGKS), 192 to 196 (FTTIV), 214 to 217 (DLPG), 284 to 287 (NKMD), and 319 to 321 (STL). Mg(2+) is bound by residues serine 174 and threonine 194. In terms of domain architecture, OCT spans 360 to 438 (GFSEEEKAFE…IGNFEFEFVD (79 aa)).

The protein belongs to the TRAFAC class OBG-HflX-like GTPase superfamily. OBG GTPase family. As to quaternary structure, monomer. It depends on Mg(2+) as a cofactor.

Its subcellular location is the cytoplasm. Functionally, an essential GTPase which binds GTP, GDP and possibly (p)ppGpp with moderate affinity, with high nucleotide exchange rates and a fairly low GTP hydrolysis rate. Plays a role in control of the cell cycle, stress response, ribosome biogenesis and in those bacteria that undergo differentiation, in morphogenesis control. The protein is GTPase Obg of Streptococcus uberis (strain ATCC BAA-854 / 0140J).